The sequence spans 1312 residues: Tetratricopeptide repeat protein 21B (1312 aa).

6 TPR repeats span residues 4–38, 110–143, 147–180, 182–213, 214–247, and 325–358; these read TDHYITAGIIYYCQEKYHQHVQNLAREGLKKYSND, PKALYYAGMFLWLMGRTDKAREYIDRMLKISNRS, LVLRGWLDLSSEKESTVNKSIRYFEEGIQDNKDI, ALIGKAQYFMAHQNYSGALDVINQIIVNYPPF, LPALTLKMRLFLAQQDWDQTLETAQRILLKDGAN, and AEVATALANNFILQGNVTEAAGWYATAMKLDGNH. The stretch at 365–392 forms a coiled coil; it reads VIQCQILQGQLEEAEQQLDFLHEIQESI. TPR repeat units follow at residues 493 to 526, 528 to 560, 564 to 597, 615 to 648, 720 to 753, 755 to 787, 789 to 820, 829 to 861, 881 to 914, 916 to 947, 948 to 981, 983 to 1015, 1019 to 1052, 1193 to 1226, 1228 to 1260, and 1262 to 1295; these read TEPLYYTAQIKYLAGNLEGAQGSLQRCIEVDTAC, DFHLLMAQIHYAQGKFAECSVSLETGVSHNFKV, PLYHLIRARVLRKTGELQEAIKTLKMTMSLQEMK, VSIYLELAELLRLNGEQHEATKIIQDAINEFGGT, PHTSVLLGDALMNIQEPEKALEVYNEALHKNPQD, SLANRIGQALIKTHQYKKAVNYYEAAQKISGQD, LCCDLAELLIKLKQYSKAEAVLKQALAHEPVS, AKCLGLLGTTYQNYKKEESADILNKALELQQRI, SEICVQLAEHYVDQRNYEQAANYYKEAMVYSQDS, VKLQLSRLYLMMGDLDSCENHCSALLENHSFK, EEAAMMMADVMFRKQDYTKSIELFDQILEENPDN, AVLSKLIDLLRRSGNLSKAPMFFEKALANSSRT, PGYNYCKGLYCWYLGQPNDGLKYFNKARKDSEWG, EKSWLLLADVYIKLGKYDIATELLKRCLLYNKSC, KAYEYLGFIMENEQSYKDAAANYRLAWDYSNQS, and PAVGFRLAFNYLKDKKYVDAIDICHKVLKAHPTY.

It belongs to the TTC21 family. Component of the IFT complex A (IFT-A).

Functionally, component of the IFT complex A (IFT-A), a complex required for retrograde ciliary transport and entry into cilia of G protein-coupled receptors (GPCRs). Negatively modulates the SHH signal transduction. The protein is Tetratricopeptide repeat protein 21B (ttc21b) of Xenopus laevis (African clawed frog).